Here is a 498-residue protein sequence, read N- to C-terminus: Glycerol kinase (498 aa).

Residue Thr-12 participates in ADP binding. ATP-binding residues include Thr-12, Thr-13, and Ser-14. A sn-glycerol 3-phosphate-binding site is contributed by Thr-12. Arg-16 contacts ADP. Arg-82, Glu-83, Tyr-134, and Asp-244 together coordinate sn-glycerol 3-phosphate. Arg-82, Glu-83, Tyr-134, Asp-244, and Gln-245 together coordinate glycerol. ADP is bound by residues Thr-266 and Gly-310. ATP contacts are provided by Thr-266, Gly-310, Gln-314, and Gly-411. The ADP site is built by Gly-411 and Asn-415.

It belongs to the FGGY kinase family.

The enzyme catalyses glycerol + ATP = sn-glycerol 3-phosphate + ADP + H(+). The protein operates within polyol metabolism; glycerol degradation via glycerol kinase pathway; sn-glycerol 3-phosphate from glycerol: step 1/1. With respect to regulation, inhibited by fructose 1,6-bisphosphate (FBP). Functionally, key enzyme in the regulation of glycerol uptake and metabolism. Catalyzes the phosphorylation of glycerol to yield sn-glycerol 3-phosphate. This chain is Glycerol kinase, found in Chloroflexus aurantiacus (strain ATCC 29366 / DSM 635 / J-10-fl).